A 155-amino-acid polypeptide reads, in one-letter code: Small ribosomal subunit protein uS7 (155 aa).

This sequence belongs to the universal ribosomal protein uS7 family. In terms of assembly, part of the 30S ribosomal subunit. Contacts proteins S9 and S11.

One of the primary rRNA binding proteins, it binds directly to 16S rRNA where it nucleates assembly of the head domain of the 30S subunit. Is located at the subunit interface close to the decoding center, probably blocks exit of the E-site tRNA. The polypeptide is Small ribosomal subunit protein uS7 (Thermotoga neapolitana (strain ATCC 49049 / DSM 4359 / NBRC 107923 / NS-E)).